The sequence spans 286 residues: Shikimate dehydrogenase (NADP(+)) (286 aa).

Shikimate contacts are provided by residues 19–21 (SVS) and threonine 66. Catalysis depends on lysine 70, which acts as the Proton acceptor. Shikimate is bound by residues asparagine 91 and aspartate 106. NADP(+) contacts are provided by residues 130-134 (GAGGS) and alanine 225. Tyrosine 227 is a binding site for shikimate. Residue glycine 248 coordinates NADP(+).

This sequence belongs to the shikimate dehydrogenase family. In terms of assembly, homodimer.

The catalysed reaction is shikimate + NADP(+) = 3-dehydroshikimate + NADPH + H(+). It participates in metabolic intermediate biosynthesis; chorismate biosynthesis; chorismate from D-erythrose 4-phosphate and phosphoenolpyruvate: step 4/7. Functionally, involved in the biosynthesis of the chorismate, which leads to the biosynthesis of aromatic amino acids. Catalyzes the reversible NADPH linked reduction of 3-dehydroshikimate (DHSA) to yield shikimate (SA). The polypeptide is Shikimate dehydrogenase (NADP(+)) (Dehalococcoides mccartyi (strain ATCC BAA-2100 / JCM 16839 / KCTC 5957 / BAV1)).